Here is a 241-residue protein sequence, read N- to C-terminus: DNA repair protein RecO (241 aa).

The protein belongs to the RecO family.

Its function is as follows. Involved in DNA repair and RecF pathway recombination. The sequence is that of DNA repair protein RecO from Roseobacter denitrificans (strain ATCC 33942 / OCh 114) (Erythrobacter sp. (strain OCh 114)).